A 338-amino-acid chain; its full sequence is tRNA N6-adenosine threonylcarbamoyltransferase (338 aa).

Fe cation-binding residues include His-111 and His-115. Substrate is bound by residues 134 to 138 (LVSGG), Asp-167, Gly-180, and Asn-272. A Fe cation-binding site is contributed by Asp-300.

The protein belongs to the KAE1 / TsaD family. It depends on Fe(2+) as a cofactor.

The protein resides in the cytoplasm. It carries out the reaction L-threonylcarbamoyladenylate + adenosine(37) in tRNA = N(6)-L-threonylcarbamoyladenosine(37) in tRNA + AMP + H(+). Functionally, required for the formation of a threonylcarbamoyl group on adenosine at position 37 (t(6)A37) in tRNAs that read codons beginning with adenine. Is involved in the transfer of the threonylcarbamoyl moiety of threonylcarbamoyl-AMP (TC-AMP) to the N6 group of A37, together with TsaE and TsaB. TsaD likely plays a direct catalytic role in this reaction. The protein is tRNA N6-adenosine threonylcarbamoyltransferase of Shewanella pealeana (strain ATCC 700345 / ANG-SQ1).